A 179-amino-acid chain; its full sequence is Large ribosomal subunit protein uL5 (179 aa).

Belongs to the universal ribosomal protein uL5 family. In terms of assembly, part of the 50S ribosomal subunit; part of the 5S rRNA/L5/L18/L25 subcomplex. Contacts the 5S rRNA and the P site tRNA. Forms a bridge to the 30S subunit in the 70S ribosome.

This is one of the proteins that bind and probably mediate the attachment of the 5S RNA into the large ribosomal subunit, where it forms part of the central protuberance. In the 70S ribosome it contacts protein S13 of the 30S subunit (bridge B1b), connecting the 2 subunits; this bridge is implicated in subunit movement. Contacts the P site tRNA; the 5S rRNA and some of its associated proteins might help stabilize positioning of ribosome-bound tRNAs. In Buchnera aphidicola subsp. Acyrthosiphon pisum (strain APS) (Acyrthosiphon pisum symbiotic bacterium), this protein is Large ribosomal subunit protein uL5.